The chain runs to 155 residues: 6,7-dimethyl-8-ribityllumazine synthase (155 aa).

5-amino-6-(D-ribitylamino)uracil-binding positions include F23, 57–59 (AFE), and 81–83 (AVI). (2S)-2-hydroxy-3-oxobutyl phosphate is bound at residue 86–87 (ST). Catalysis depends on H89, which acts as the Proton donor. F114 serves as a coordination point for 5-amino-6-(D-ribitylamino)uracil. R128 contributes to the (2S)-2-hydroxy-3-oxobutyl phosphate binding site.

Belongs to the DMRL synthase family.

It carries out the reaction (2S)-2-hydroxy-3-oxobutyl phosphate + 5-amino-6-(D-ribitylamino)uracil = 6,7-dimethyl-8-(1-D-ribityl)lumazine + phosphate + 2 H2O + H(+). Its pathway is cofactor biosynthesis; riboflavin biosynthesis; riboflavin from 2-hydroxy-3-oxobutyl phosphate and 5-amino-6-(D-ribitylamino)uracil: step 1/2. Its function is as follows. Catalyzes the formation of 6,7-dimethyl-8-ribityllumazine by condensation of 5-amino-6-(D-ribitylamino)uracil with 3,4-dihydroxy-2-butanone 4-phosphate. This is the penultimate step in the biosynthesis of riboflavin. This is 6,7-dimethyl-8-ribityllumazine synthase from Dehalococcoides mccartyi (strain ATCC BAA-2266 / KCTC 15142 / 195) (Dehalococcoides ethenogenes (strain 195)).